We begin with the raw amino-acid sequence, 223 residues long: Large ribosomal subunit protein uL4 (223 aa).

A disordered region spans residues 49-106 (AAARQGTHSTKTRGEVSGGGRKPYRQKGTGRARQGSTRAPQFTGGGVVHGPKPRDYSQ).

The protein belongs to the universal ribosomal protein uL4 family. As to quaternary structure, part of the 50S ribosomal subunit.

Functionally, one of the primary rRNA binding proteins, this protein initially binds near the 5'-end of the 23S rRNA. It is important during the early stages of 50S assembly. It makes multiple contacts with different domains of the 23S rRNA in the assembled 50S subunit and ribosome. In terms of biological role, forms part of the polypeptide exit tunnel. In Mycobacterium bovis (strain ATCC BAA-935 / AF2122/97), this protein is Large ribosomal subunit protein uL4.